Reading from the N-terminus, the 386-residue chain is Phosphoglycerate kinase (386 aa).

Substrate is bound by residues D21–N23, R36, H59–R62, R112, and R145. ATP is bound by residues K196, E313, and G339–T342.

The protein belongs to the phosphoglycerate kinase family. In terms of assembly, monomer.

The protein localises to the cytoplasm. It carries out the reaction (2R)-3-phosphoglycerate + ATP = (2R)-3-phospho-glyceroyl phosphate + ADP. It participates in carbohydrate degradation; glycolysis; pyruvate from D-glyceraldehyde 3-phosphate: step 2/5. The chain is Phosphoglycerate kinase from Haemophilus influenzae (strain PittGG).